The chain runs to 169 residues: U3 small nucleolar ribonucleoprotein protein imp3 (169 aa).

The S4 RNA-binding domain maps to 109–166 (RRLPVVMCRLKMCETVSTSVKYVEHGHVRVGPEVITDPAFFVTRNMEDFVTWVDSSKI).

It belongs to the universal ribosomal protein uS4 family. Component of a heterotrimeric complex containing imp3, imp4 and mpp10.

It is found in the nucleus. Its subcellular location is the nucleolus. Its function is as follows. Component of the U3 small nucleolar ribonucleoprotein. Required for the early cleavages at sites A0, A1 and A2 during 18S ribosomal pre-RNA processing. In Pneumocystis carinii, this protein is U3 small nucleolar ribonucleoprotein protein imp3 (RBP).